Consider the following 575-residue polypeptide: Alpha-(1,6)-fucosyltransferase (575 aa).

The Cytoplasmic portion of the chain corresponds to 1-9 (MRPWTGSWR). The chain crosses the membrane as a helical; Signal-anchor for type II membrane protein span at residues 10 to 30 (WIMLILFAWGTLLFYIGGHLV). Over 31–575 (RDNDHPDHSS…KVPHVPEAEK (545 aa)) the chain is Lumenal. Disulfide bonds link Cys204–Cys266, Cys212–Cys230, and Cys218–Cys222. The 288-residue stretch at 206–493 (KAKKLVCNIN…PDASANFHSL (288 aa)) folds into the GT23 domain. Ser278 carries the phosphoserine modification. Positions 299 to 305 (PRPPYLP) match the SH3-binding motif. Residues 365 to 366 (RR) form an important for donor substrate binding region. Cys465 and Cys472 are joined by a disulfide. Residues 502–563 (QNAHNQIAIY…PSYKVREKIE (62 aa)) form the SH3 domain.

This sequence belongs to the glycosyltransferase 23 family. Tyrosine phosphorylated by PKDCC/VLK. As to expression, highest expression found in brain. Also found in heart, lung, spleen and kidney.

Its subcellular location is the golgi apparatus. It localises to the golgi stack membrane. The catalysed reaction is N(4)-{beta-D-GlcNAc-(1-&gt;2)-alpha-D-Man-(1-&gt;3)-[beta-D-GlcNAc-(1-&gt;2)-alpha-D-Man-(1-&gt;6)]-beta-D-Man-(1-&gt;4)-beta-D-GlcNAc-(1-&gt;4)-beta-D-GlcNAc}-L-asparaginyl-[protein] + GDP-beta-L-fucose = an N(4)-{beta-D-GlcNAc-(1-&gt;2)-alpha-D-Man-(1-&gt;3)-[beta-D-GlcNAc-(1-&gt;2)-alpha-D-Man-(1-&gt;6)]-beta-D-Man-(1-&gt;4)-beta-D-GlcNAc-(1-&gt;4)-[alpha-L-Fuc-(1-&gt;6)]-beta-D-GlcNAc}-L-asparaginyl-[protein] + GDP + H(+). It participates in protein modification; protein glycosylation. Catalyzes the addition of fucose in alpha 1-6 linkage to the first GlcNAc residue, next to the peptide chains in N-glycans. This chain is Alpha-(1,6)-fucosyltransferase (FUT8), found in Bos taurus (Bovine).